The sequence spans 374 residues: GDSL esterase/lipase At1g71250 (374 aa).

A signal peptide spans 1–28 (MNTNRKKMKVHIGGYVLILALTVSVILQ). Serine 48 (nucleophile) is an active-site residue. N-linked (GlcNAc...) asparagine glycosylation is present at asparagine 162. Residues aspartate 338 and histidine 341 contribute to the active site.

It belongs to the 'GDSL' lipolytic enzyme family.

It localises to the secreted. The protein is GDSL esterase/lipase At1g71250 of Arabidopsis thaliana (Mouse-ear cress).